The sequence spans 874 residues: Pyruvate, phosphate dikinase (874 aa).

Residues 2-340 (AKWVYKFEEG…LYFLQTRNGK (339 aa)) form an N-terminal region. Arginine 92 contributes to the ATP binding site. The tract at residues 340–399 (KRTAPAALQIACDLVDEGMITEEEAVVRIEAKSLDQLLHPTFNPAALKAGEVIGSALPAS) is linker 1. The tract at residues 400–498 (PGAAAGKVYF…TFAEGDYISL (99 aa)) is central. Threonine 453 is subject to Phosphothreonine; by PDRP1. The active-site Tele-phosphohistidine intermediate is the histidine 455. The segment at 499–533 (DGSTGKIYKGDIETQEASVSGSFERIMVWADKFRT) is linker 2. The C-terminal stretch occupies residues 534–874 (LKVRTNADTP…AAAQAALNNK (341 aa)). The substrate site is built by arginine 561, arginine 617, glutamate 745, glycine 766, threonine 767, asparagine 768, and aspartate 769. Glutamate 745 contacts Mg(2+). Residue aspartate 769 coordinates Mg(2+). Cysteine 831 (proton donor) is an active-site residue.

This sequence belongs to the PEP-utilizing enzyme family. In terms of assembly, homodimer. Mg(2+) serves as cofactor. Phosphorylation of Thr-453 in the dark inactivates the enzyme. Dephosphorylation upon light stimulation reactivates the enzyme.

It catalyses the reaction pyruvate + phosphate + ATP = phosphoenolpyruvate + AMP + diphosphate + H(+). Its activity is regulated as follows. Activated by light-induced dephosphorylation. Inhibited by dark-induced phosphorylation. Both reactions are catalyzed by PDRP1. Catalyzes the reversible phosphorylation of pyruvate and phosphate. In E.histolytica and C.symbiosus, PPDK functions in the direction of ATP synthesis. The sequence is that of Pyruvate, phosphate dikinase (ppdK) from Clostridium symbiosum (Bacteroides symbiosus).